Reading from the N-terminus, the 674-residue chain is DNA mismatch repair protein MutL (674 aa).

Belongs to the DNA mismatch repair MutL/HexB family.

In terms of biological role, this protein is involved in the repair of mismatches in DNA. It is required for dam-dependent methyl-directed DNA mismatch repair. May act as a 'molecular matchmaker', a protein that promotes the formation of a stable complex between two or more DNA-binding proteins in an ATP-dependent manner without itself being part of a final effector complex. In Clostridium perfringens (strain 13 / Type A), this protein is DNA mismatch repair protein MutL.